Consider the following 309-residue polypeptide: Homoserine kinase (309 aa).

91–101 contributes to the ATP binding site; the sequence is PIGSGLGSSAC.

It belongs to the GHMP kinase family. Homoserine kinase subfamily.

The protein localises to the cytoplasm. The catalysed reaction is L-homoserine + ATP = O-phospho-L-homoserine + ADP + H(+). Its pathway is amino-acid biosynthesis; L-threonine biosynthesis; L-threonine from L-aspartate: step 4/5. In terms of biological role, catalyzes the ATP-dependent phosphorylation of L-homoserine to L-homoserine phosphate. The protein is Homoserine kinase of Pectobacterium carotovorum subsp. carotovorum (strain PC1).